Here is a 201-residue protein sequence, read N- to C-terminus: Ciliary microtubule inner protein 2C (201 aa).

The protein belongs to the CIMIP2 family. Microtubule inner protein component of sperm flagellar doublet microtubules. In terms of tissue distribution, expressed in airway epithelial cells.

It is found in the cytoplasm. Its subcellular location is the cytoskeleton. The protein resides in the cilium axoneme. It localises to the flagellum axoneme. Its function is as follows. Microtubule inner protein (MIP) part of the dynein-decorated doublet microtubules (DMTs) in cilia axoneme, which is required for motile cilia beating. Binds to the intra-tubulin interfaces. The chain is Ciliary microtubule inner protein 2C from Homo sapiens (Human).